Reading from the N-terminus, the 135-residue chain is Histone H3 type 1 (135 aa).

A disordered region spans residues 1–40; the sequence is MARTKQTARKSTGGKAPRKQLATKAARKTPATGGVKKPHR. Position 5 is an N6-methyllysine (Lys-5). Position 10 is an N6-acetyllysine; alternate (Lys-10). Lys-10 bears the N6-methyllysine; alternate mark. Ser-11 bears the Phosphoserine mark. Thr-12 is modified (phosphothreonine). Residues Lys-15, Lys-19, and Lys-24 each carry the N6-acetyllysine modification. Lys-28 bears the N6-acetyllysine; alternate mark. Residue Lys-28 is modified to N6-methyllysine; alternate. Lys-36 and Lys-37 each carry N6-methyllysine.

It belongs to the histone H3 family. As to quaternary structure, the nucleosome is a histone octamer containing two molecules each of H2A, H2B, H3 and H4 assembled in one H3-H4 heterotetramer and two H2A-H2B heterodimers. The octamer wraps approximately 147 bp of DNA. In terms of processing, acetylation is generally linked to gene activation. Acetylated to form H3K9ac (11%), H3K14ac (17%), H3K18ac (11%), H3K23ac (16%) and H3K27ac (7%). H3K4, H3K35 and H3K36 are not acetylated. H3K4me prevents acetylation. 32% of the histone H3 are acetylated with, on average, 2.4 acetyl-Lys. They are all continuously deacatylated and re-acetylated with a half-life of approximately 2 minutes. Post-translationally, monomethylated to form H3K4me1 (81%), H3K9me1 (16%), H3K27me1 (25%), H3K35me1 (25%) and H3K36me1 (5%). No methylation at H3K14, H3K18 and H3K23. Methylated by a protein complex that includes Mut11. Set1 methylates specifically H3K4. H3K4me1 is associated with silenced euchromatin. Set3 forms H3K9me1, while H3K9me2 is undetected. H3K9me1 is specifically associated with silent, multi-copy transgenes. No phosphorylation detected.

It is found in the nucleus. The protein resides in the chromosome. Its function is as follows. Core component of nucleosome. Nucleosomes wrap and compact DNA into chromatin, limiting DNA accessibility to the cellular machineries which require DNA as a template. Histones thereby play a central role in transcription regulation, DNA repair, DNA replication and chromosomal stability. DNA accessibility is regulated via a complex set of post-translational modifications of histones, also called histone code, and nucleosome remodeling. In Chlamydomonas reinhardtii (Chlamydomonas smithii), this protein is Histone H3 type 1 (ch3-I).